The following is a 62-amino-acid chain: uncharacterized protein (62 aa).

It belongs to the asfivirus C62L family.

This is an uncharacterized protein from African swine fever virus (strain Badajoz 1971 Vero-adapted) (Ba71V).